The following is a 213-amino-acid chain: Major fimbrial subunit (213 aa).

The first 20 residues, 1-20 (MKKTLLGSLILLAFAGNVQA), serve as a signal peptide directing secretion. An intrachain disulfide couples Cys-41 to Cys-81.

It belongs to the fimbrial protein family.

It localises to the fimbrium. Its function is as follows. Mediates adherence to oropharyngeal epithelial cells. Helps the airway colonization process. This is Major fimbrial subunit (hifA) from Haemophilus influenzae.